Reading from the N-terminus, the 51-residue chain is UPF0320 protein YOL166W-A (51 aa).

This sequence belongs to the UPF0320 family.

The polypeptide is UPF0320 protein YOL166W-A (Saccharomyces cerevisiae (strain ATCC 204508 / S288c) (Baker's yeast)).